The primary structure comprises 805 residues: Kinesin-like protein KIP3 (805 aa).

The Kinesin motor domain occupies 10–438 (SIVVAIRVRP…LKYANRAKEI (429 aa)). ATP is bound at residue 192-199 (GATGCGKT). Residues 449-481 (LSRHVGSYLKMITEQKRQIEELREREEKMISLK) adopt a coiled-coil conformation. Residues 720–805 (NFSQKKVKWT…HQSLLATARK (86 aa)) are disordered. A compositionally biased stretch (polar residues) spans 764–773 (MQDTTFNEQG). A compositionally biased stretch (low complexity) spans 774 to 783 (PSTPSAPTTA). Residues 792–805 (SLLTHQSLLATARK) show a composition bias toward polar residues.

This sequence belongs to the TRAFAC class myosin-kinesin ATPase superfamily. Kinesin family. Kinesin II subfamily.

The protein localises to the cytoplasm. The protein resides in the cytoskeleton. This chain is Kinesin-like protein KIP3 (KIP3), found in Saccharomyces cerevisiae (strain ATCC 204508 / S288c) (Baker's yeast).